Here is a 281-residue protein sequence, read N- to C-terminus: Pantothenate synthetase (281 aa).

ATP is bound at residue 30 to 37 (MGNLHQGH). The active-site Proton donor is the His37. Position 61 (Gln61) interacts with (R)-pantoate. Gln61 contributes to the beta-alanine binding site. Position 149-152 (149-152 (GRKD)) interacts with ATP. Gln155 serves as a coordination point for (R)-pantoate. ATP-binding positions include Ile178 and 186–189 (MSSR).

It belongs to the pantothenate synthetase family. As to quaternary structure, homodimer.

It is found in the cytoplasm. It catalyses the reaction (R)-pantoate + beta-alanine + ATP = (R)-pantothenate + AMP + diphosphate + H(+). It participates in cofactor biosynthesis; (R)-pantothenate biosynthesis; (R)-pantothenate from (R)-pantoate and beta-alanine: step 1/1. In terms of biological role, catalyzes the condensation of pantoate with beta-alanine in an ATP-dependent reaction via a pantoyl-adenylate intermediate. This is Pantothenate synthetase from Shewanella denitrificans (strain OS217 / ATCC BAA-1090 / DSM 15013).